Here is a 127-residue protein sequence, read N- to C-terminus: Holo-[acyl-carrier-protein] synthase (127 aa).

Mg(2+)-binding residues include Asp-9 and Glu-58.

This sequence belongs to the P-Pant transferase superfamily. AcpS family. Requires Mg(2+) as cofactor.

The protein localises to the cytoplasm. It carries out the reaction apo-[ACP] + CoA = holo-[ACP] + adenosine 3',5'-bisphosphate + H(+). Its function is as follows. Transfers the 4'-phosphopantetheine moiety from coenzyme A to a Ser of acyl-carrier-protein. This Shewanella sp. (strain MR-4) protein is Holo-[acyl-carrier-protein] synthase.